Reading from the N-terminus, the 64-residue chain is Large ribosomal subunit protein bL35 (64 aa).

A disordered region spans residues 1-55; that stretch reads MPKMKTNKSVSARFKLTASGQLKRTRPGKRHKLSKKSSQEKRNLSKQPLVDKGQV. A compositionally biased stretch (basic residues) spans 23-35; the sequence is KRTRPGKRHKLSK.

Belongs to the bacterial ribosomal protein bL35 family.

The protein is Large ribosomal subunit protein bL35 of Chlamydia pneumoniae (Chlamydophila pneumoniae).